Consider the following 363-residue polypeptide: Chorismate synthase (363 aa).

Residues arginine 48 and arginine 54 each coordinate NADP(+). Residues 125–127, 237–238, glycine 277, 292–296, and arginine 318 each bind FMN; these read RSS, NA, and KPTSS.

It belongs to the chorismate synthase family. In terms of assembly, homotetramer. FMNH2 serves as cofactor.

It carries out the reaction 5-O-(1-carboxyvinyl)-3-phosphoshikimate = chorismate + phosphate. It functions in the pathway metabolic intermediate biosynthesis; chorismate biosynthesis; chorismate from D-erythrose 4-phosphate and phosphoenolpyruvate: step 7/7. In terms of biological role, catalyzes the anti-1,4-elimination of the C-3 phosphate and the C-6 proR hydrogen from 5-enolpyruvylshikimate-3-phosphate (EPSP) to yield chorismate, which is the branch point compound that serves as the starting substrate for the three terminal pathways of aromatic amino acid biosynthesis. This reaction introduces a second double bond into the aromatic ring system. In Pseudomonas fluorescens (strain Pf0-1), this protein is Chorismate synthase.